We begin with the raw amino-acid sequence, 335 residues long: Beta-hexosaminidase (335 aa).

Substrate is bound by residues Asp60, Arg68, Arg133, and 163–164 (KH). His176 acts as the Proton donor/acceptor in catalysis. The active-site Nucleophile is the Asp247.

Belongs to the glycosyl hydrolase 3 family. NagZ subfamily. In terms of assembly, monomer.

It localises to the cytoplasm. The enzyme catalyses Hydrolysis of terminal non-reducing N-acetyl-D-hexosamine residues in N-acetyl-beta-D-hexosaminides.. Its pathway is cell wall biogenesis; peptidoglycan recycling. In terms of biological role, plays a role in peptidoglycan recycling by cleaving the terminal beta-1,4-linked N-acetylglucosamine (GlcNAc) from peptide-linked peptidoglycan fragments, giving rise to free GlcNAc, anhydro-N-acetylmuramic acid and anhydro-N-acetylmuramic acid-linked peptides. The protein is Beta-hexosaminidase of Xylella fastidiosa (strain 9a5c).